Here is a 463-residue protein sequence, read N- to C-terminus: MMSSRTQDADGASIRFSDHTLDKATKAKVTLENYYSNLVTQYGERKQRLAKLEAQLKDESLSEAQRQEKRLQHAQKETEYLRLKRLRLGVEDFEALKVIGRGAFGEVRLVQKKDTGHVYAMKVLRKADMLEKEQVAHVRAERDVLVEADHQWVVKMYYSFQDPVNLYLIMEFLPGGDMMTLLMKKDTLSEEGTQFYISETALAIDSIHKLGFIHRDIKPDNLLLDARGHLKLSDFGLCTGLKKSHRTDFYRDLSQAKPSDFIGTCASLSCSPMDSKRRAESWKRNRRALAYSTVGTPDYIAPEVFLQTGYGPACDWWSLGVIMYEMLMGYPPFCSDNPQDTYRKVMNWRETLIFPPEIPISEEAKETIINFCCEADRRLGSQRGLEDLKSVPFFRGVDWEHIRERPAAIPVEVRSIDDTSNFDEFPDVSLEIPSAPIPQGGEIAKDWVFINYTYKRFEVRNLE.

In terms of domain architecture, Protein kinase spans Phe93–Phe394. ATP-binding positions include Ile99 to Val107 and Lys122. An interaction with mats and Mob1 region spans residues Tyr119 to Thr180. Catalysis depends on Asp216, which acts as the Proton acceptor. Ser292 is modified (phosphoserine). An AGC-kinase C-terminal domain is found at Arg395–Glu463. Residue Thr453 is modified to Phosphothreonine.

It belongs to the protein kinase superfamily. AGC Ser/Thr protein kinase family. Interacts with, and is activated by, Mob1. It depends on Mg(2+) as a cofactor. Expressed in the peripheral and central nervous system (at protein level). Expressed in the wing imaginal disk.

It is found in the cytoplasm. The protein localises to the nucleus. The catalysed reaction is L-seryl-[protein] + ATP = O-phospho-L-seryl-[protein] + ADP + H(+). It catalyses the reaction L-threonyl-[protein] + ATP = O-phospho-L-threonyl-[protein] + ADP + H(+). Its activity is regulated as follows. Activated by fry. Its function is as follows. Serine/threonine-protein kinase involved in controlling cell structure and proliferation of a variety of polarized outgrowths including epidermal hairs, bristles, arista laterals, and dendrites. Together with fry, maintains the integrity of epidermal hairs and is an essential component of the signaling pathway regulating dendritic branching of sensory neurons. Reduces neurite outgrowth by phosphorylating pav, thereby inhibiting its function in microtubule-microtubule sliding. This is Serine/threonine-protein kinase tricornered from Drosophila melanogaster (Fruit fly).